The sequence spans 247 residues: Synaptonemal complex central element protein 1-like (247 aa).

The stretch at 71–196 (SEELGEAQAL…LQEARETWDS (126 aa)) forms a coiled coil. The segment at 189–247 (EARETWDSPGNCGLKTELEELEGQSQRSPEAQNDKGEASQEEQHHLETSEELPRTGTLC) is disordered. The segment covering 220-241 (QNDKGEASQEEQHHLETSEELP) has biased composition (basic and acidic residues).

This sequence belongs to the SYCE family. As to expression, isoform 1 is abundantly expressed in testis and weakly in ovary, it is not found in other tissues. Isoform 2 is expressed in testis and poorly in brain, heart, lung and other examined tissues.

In terms of biological role, may be involved in meiosis. Isoform 1 may be involved in meiosis during spermatogenesis while isoform 2 is probably related to a later stage of meiosis, in the development stage of secondary spermatocytes and spermatids. This chain is Synaptonemal complex central element protein 1-like (Syce1l), found in Mus musculus (Mouse).